Reading from the N-terminus, the 101-residue chain is Ubiquitin-related modifier 1 (101 aa).

Residue G101 is modified to 1-thioglycine. G101 participates in a covalent cross-link: Glycyl lysine isopeptide (Gly-Lys) (interchain with K-? in acceptor proteins).

It belongs to the URM1 family. C-terminal thiocarboxylation occurs in 2 steps, it is first acyl-adenylated (-COAMP) via the hesA/moeB/thiF part of UBA4, then thiocarboxylated (-COSH) via the rhodanese domain of UBA4.

The protein localises to the cytoplasm. The protein operates within tRNA modification; 5-methoxycarbonylmethyl-2-thiouridine-tRNA biosynthesis. Acts as a sulfur carrier required for 2-thiolation of mcm(5)S(2)U at tRNA wobble positions of cytosolic tRNA(Lys), tRNA(Glu) and tRNA(Gln). Serves as sulfur donor in tRNA 2-thiolation reaction by being thiocarboxylated (-COSH) at its C-terminus by the MOCS3 homolog UBA4. The sulfur is then transferred to tRNA to form 2-thiolation of mcm(5)S(2)U. Prior mcm(5) tRNA modification by the elongator complex is required for 2-thiolation. Also acts as a ubiquitin-like protein (UBL) that is covalently conjugated via an isopeptide bond to lysine residues of target proteins such as AHP1. The thiocarboxylated form serves as substrate for conjugation and oxidative stress specifically induces the formation of UBL-protein conjugates. The polypeptide is Ubiquitin-related modifier 1 (Debaryomyces hansenii (strain ATCC 36239 / CBS 767 / BCRC 21394 / JCM 1990 / NBRC 0083 / IGC 2968) (Yeast)).